The following is a 238-amino-acid chain: 1-(5-phosphoribosyl)-5-[(5-phosphoribosylamino)methylideneamino] imidazole-4-carboxamide isomerase (238 aa).

The Proton acceptor role is filled by D8. Catalysis depends on D129, which acts as the Proton donor.

Belongs to the HisA/HisF family.

The protein resides in the cytoplasm. It catalyses the reaction 1-(5-phospho-beta-D-ribosyl)-5-[(5-phospho-beta-D-ribosylamino)methylideneamino]imidazole-4-carboxamide = 5-[(5-phospho-1-deoxy-D-ribulos-1-ylimino)methylamino]-1-(5-phospho-beta-D-ribosyl)imidazole-4-carboxamide. The protein operates within amino-acid biosynthesis; L-histidine biosynthesis; L-histidine from 5-phospho-alpha-D-ribose 1-diphosphate: step 4/9. This is 1-(5-phosphoribosyl)-5-[(5-phosphoribosylamino)methylideneamino] imidazole-4-carboxamide isomerase from Clostridium novyi (strain NT).